Reading from the N-terminus, the 130-residue chain is Small ribosomal subunit protein uS9 (130 aa).

Belongs to the universal ribosomal protein uS9 family.

The protein is Small ribosomal subunit protein uS9 of Cupriavidus necator (strain ATCC 17699 / DSM 428 / KCTC 22496 / NCIMB 10442 / H16 / Stanier 337) (Ralstonia eutropha).